The primary structure comprises 329 residues: Acetyl-coenzyme A carboxylase carboxyl transferase subunit alpha (329 aa).

The region spanning 40 to 294 (QLETLAARRR…REAIERHLDD (255 aa)) is the CoA carboxyltransferase C-terminal domain.

It belongs to the AccA family. Acetyl-CoA carboxylase is a heterohexamer composed of biotin carboxyl carrier protein (AccB), biotin carboxylase (AccC) and two subunits each of ACCase subunit alpha (AccA) and ACCase subunit beta (AccD).

It localises to the cytoplasm. The catalysed reaction is N(6)-carboxybiotinyl-L-lysyl-[protein] + acetyl-CoA = N(6)-biotinyl-L-lysyl-[protein] + malonyl-CoA. The protein operates within lipid metabolism; malonyl-CoA biosynthesis; malonyl-CoA from acetyl-CoA: step 1/1. Functionally, component of the acetyl coenzyme A carboxylase (ACC) complex. First, biotin carboxylase catalyzes the carboxylation of biotin on its carrier protein (BCCP) and then the CO(2) group is transferred by the carboxyltransferase to acetyl-CoA to form malonyl-CoA. The protein is Acetyl-coenzyme A carboxylase carboxyl transferase subunit alpha of Prochlorococcus marinus (strain MIT 9303).